A 129-amino-acid chain; its full sequence is Small ribosomal subunit protein uS12 (129 aa).

3-methylthioaspartic acid is present on Asp-89. The interval 101 to 129 is disordered; it reads SLDTSGVADRKQSRSKYGAKQPKAGAAKK. Residues 116–129 are compositionally biased toward low complexity; that stretch reads KYGAKQPKAGAAKK.

It belongs to the universal ribosomal protein uS12 family. In terms of assembly, part of the 30S ribosomal subunit. Contacts proteins S8 and S17. May interact with IF1 in the 30S initiation complex.

In terms of biological role, with S4 and S5 plays an important role in translational accuracy. Interacts with and stabilizes bases of the 16S rRNA that are involved in tRNA selection in the A site and with the mRNA backbone. Located at the interface of the 30S and 50S subunits, it traverses the body of the 30S subunit contacting proteins on the other side and probably holding the rRNA structure together. The combined cluster of proteins S8, S12 and S17 appears to hold together the shoulder and platform of the 30S subunit. This chain is Small ribosomal subunit protein uS12, found in Chlorobaculum parvum (strain DSM 263 / NCIMB 8327) (Chlorobium vibrioforme subsp. thiosulfatophilum).